The following is a 194-amino-acid chain: Glycerol-3-phosphate acyltransferase (194 aa).

5 helical membrane passes run 2–22 (LIEI…TGLL), 51–71 (SVGI…VLAA), 80–100 (WIAL…FLGF), 112–132 (VFLG…VAVV), and 155–175 (FLSG…LVIW).

The protein belongs to the PlsY family. In terms of assembly, probably interacts with PlsX.

It is found in the cell inner membrane. The enzyme catalyses an acyl phosphate + sn-glycerol 3-phosphate = a 1-acyl-sn-glycero-3-phosphate + phosphate. It participates in lipid metabolism; phospholipid metabolism. Functionally, catalyzes the transfer of an acyl group from acyl-phosphate (acyl-PO(4)) to glycerol-3-phosphate (G3P) to form lysophosphatidic acid (LPA). This enzyme utilizes acyl-phosphate as fatty acyl donor, but not acyl-CoA or acyl-ACP. The sequence is that of Glycerol-3-phosphate acyltransferase from Geobacter metallireducens (strain ATCC 53774 / DSM 7210 / GS-15).